The chain runs to 272 residues: MWPRVLLGEARVAVDGCRALLSRLAVHFSPPWTAVSCSPLRRSLHGTATRAFPLIPIVVEQTGRGERAYDIYSRLLRERIVCVMGPIDDSVASLVIAQLLFLQSESNKKPIHMYINSPGGVVTAGLAIYDTMQYILNPICTWCVGQAASMGSLLLAAGSPGMRHSLPNSRIMIHQPSGGARGQATDIAIQAEEIMKLKKQLYNIYAKHTKQSLQVIESAMERDRYMSPMEAQEFGILDKVLVHPPQDGEDEPELVQKETATAPTDPPAPTST.

The N-terminal 52 residues, M1 to F52, are a transit peptide targeting the mitochondrion. S149 acts as the Nucleophile in catalysis. Residue H174 is part of the active site. K196 is modified (N6-succinyllysine). An N6-acetyllysine modification is found at K207. Positions V240–T272 are disordered.

This sequence belongs to the peptidase S14 family. In terms of assembly, fourteen CLPP subunits assemble into 2 heptameric rings which stack back to back to give a disk-like structure with a central cavity. Component of the ClpXP complex formed by the assembly of two CLPP heptameric rings with two CLPX hexameric rings, giving rise to a symmetrical structure with two central CLPP rings flanked by a CLPX ring at either end of the complex. As to expression, detected in liver (at protein level). High levels found in heart, liver and skeletal muscle.

It is found in the mitochondrion matrix. It catalyses the reaction Hydrolysis of proteins to small peptides in the presence of ATP and magnesium. alpha-casein is the usual test substrate. In the absence of ATP, only oligopeptides shorter than five residues are hydrolyzed (such as succinyl-Leu-Tyr-|-NHMec, and Leu-Tyr-Leu-|-Tyr-Trp, in which cleavage of the -Tyr-|-Leu- and -Tyr-|-Trp bonds also occurs).. In terms of biological role, protease component of the ClpXP complex that cleaves peptides and various proteins in an ATP-dependent process. Has low peptidase activity in the absence of CLPX. The ClpXP complex can degrade CSN1S1, CSN2 and CSN3, as well as synthetic peptides (in vitro) and may be responsible for a fairly general and central housekeeping function rather than for the degradation of specific substrates. Cleaves PINK1 in the mitochondrion. The chain is ATP-dependent Clp protease proteolytic subunit, mitochondrial from Mus musculus (Mouse).